The sequence spans 340 residues: Protein RecA (340 aa).

An ATP-binding site is contributed by Gly-74 to Thr-81.

Belongs to the RecA family.

Its subcellular location is the cytoplasm. Its function is as follows. Can catalyze the hydrolysis of ATP in the presence of single-stranded DNA, the ATP-dependent uptake of single-stranded DNA by duplex DNA, and the ATP-dependent hybridization of homologous single-stranded DNAs. It interacts with LexA causing its activation and leading to its autocatalytic cleavage. The protein is Protein RecA of Porphyromonas gingivalis (strain ATCC 33277 / DSM 20709 / CIP 103683 / JCM 12257 / NCTC 11834 / 2561).